Reading from the N-terminus, the 276-residue chain is Large ribosomal subunit protein uL2 (276 aa).

The tract at residues Met225–Lys276 is disordered. Basic residues predominate over residues Lys257–Lys276.

The protein belongs to the universal ribosomal protein uL2 family. As to quaternary structure, part of the 50S ribosomal subunit. Forms a bridge to the 30S subunit in the 70S ribosome.

In terms of biological role, one of the primary rRNA binding proteins. Required for association of the 30S and 50S subunits to form the 70S ribosome, for tRNA binding and peptide bond formation. It has been suggested to have peptidyltransferase activity; this is somewhat controversial. Makes several contacts with the 16S rRNA in the 70S ribosome. This Desulfitobacterium hafniense (strain DSM 10664 / DCB-2) protein is Large ribosomal subunit protein uL2.